The sequence spans 400 residues: Cysteine desulfurase (400 aa).

Pyridoxal 5'-phosphate-binding positions include 72 to 73 (GT), Asn-152, Gln-180, and 200 to 202 (SGH). Residue Lys-203 is modified to N6-(pyridoxal phosphate)lysine. Thr-238 is a binding site for pyridoxal 5'-phosphate. Cys-326 (cysteine persulfide intermediate) is an active-site residue. Cys-326 provides a ligand contact to [2Fe-2S] cluster.

It belongs to the class-V pyridoxal-phosphate-dependent aminotransferase family. NifS/IscS subfamily. In terms of assembly, homodimer. The cofactor is pyridoxal 5'-phosphate.

It catalyses the reaction (sulfur carrier)-H + L-cysteine = (sulfur carrier)-SH + L-alanine. Functionally, catalyzes the removal of elemental sulfur atoms from cysteine to produce alanine. Seems to participate in the biosynthesis of the nitrogenase metalloclusters by providing the inorganic sulfur required for the Fe-S core formation. This Gluconacetobacter diazotrophicus (strain ATCC 49037 / DSM 5601 / CCUG 37298 / CIP 103539 / LMG 7603 / PAl5) protein is Cysteine desulfurase.